We begin with the raw amino-acid sequence, 493 residues long: Alpha-amylase-related protein (493 aa).

Residues 1 to 19 (MFKFALTLTLCLAGSLSLA) form the signal peptide. The residue at position 20 (Gln-20) is a Pyrrolidone carboxylic acid. A disulfide bridge links Cys-47 with Cys-103. Residues Asn-117, Gln-168, and Asp-177 each coordinate Ca(2+). An intrachain disulfide couples Cys-156 to Cys-170. Residue Arg-205 participates in chloride binding. Asp-207 serves as the catalytic Nucleophile. His-211 contributes to the Ca(2+) binding site. The Proton donor role is filled by Glu-244. Chloride-binding residues include Asn-307 and Arg-342. Disulfide bonds link Cys-375–Cys-381, Cys-417–Cys-440, and Cys-447–Cys-459.

This sequence belongs to the glycosyl hydrolase 13 family. As to quaternary structure, monomer. Ca(2+) serves as cofactor. Chloride is required as a cofactor. In terms of tissue distribution, midgut and fat body.

Its subcellular location is the secreted. The catalysed reaction is Endohydrolysis of (1-&gt;4)-alpha-D-glucosidic linkages in polysaccharides containing three or more (1-&gt;4)-alpha-linked D-glucose units.. The chain is Alpha-amylase-related protein (Amyrel) from Drosophila melanogaster (Fruit fly).